A 738-amino-acid polypeptide reads, in one-letter code: Polyphosphate kinase (738 aa).

A disordered region spans residues Met1–Leu48. Over residues Ala19–Asp30 the composition is skewed to basic and acidic residues. An ATP-binding site is contributed by Asn91. Mg(2+) contacts are provided by Arg427 and Arg457. The active-site Phosphohistidine intermediate is His487. The ATP site is built by Tyr520, Arg620, and His648.

This sequence belongs to the polyphosphate kinase 1 (PPK1) family. The cofactor is Mg(2+). An intermediate of this reaction is the autophosphorylated ppk in which a phosphate is covalently linked to a histidine residue through a N-P bond.

The enzyme catalyses [phosphate](n) + ATP = [phosphate](n+1) + ADP. Catalyzes the reversible transfer of the terminal phosphate of ATP to form a long-chain polyphosphate (polyP). This chain is Polyphosphate kinase, found in Mycobacterium marinum (strain ATCC BAA-535 / M).